The primary structure comprises 219 residues: Elongation factor Ts (219 aa).

Residues 82–85 (TDFV) form an involved in Mg(2+) ion dislocation from EF-Tu region.

Belongs to the EF-Ts family.

The protein localises to the cytoplasm. Its function is as follows. Associates with the EF-Tu.GDP complex and induces the exchange of GDP to GTP. It remains bound to the aminoacyl-tRNA.EF-Tu.GTP complex up to the GTP hydrolysis stage on the ribosome. This chain is Elongation factor Ts, found in Trichodesmium erythraeum (strain IMS101).